The following is a 460-amino-acid chain: Nuclear distribution protein PAC1-1 (460 aa).

In terms of domain architecture, LisH spans 9–41; sequence QADELHRALIAYLTAANLPNTAAALREELNLGE. A coiled-coil region spans residues 74-96; sequence LVTQIMDLESRNHILQSELDNAT. The span at 90 to 100 shows a compositional bias: polar residues; that stretch reads SELDNATPTSR. The disordered stretch occupies residues 90-115; it reads SELDNATPTSRQNKDPVAWLPRAPPR. WD repeat units lie at residues 120–161, 163–203, 207–247, 250–289, 294–354, 355–394, 399–439, and 441–460; these read SHRD…RTIK, HTKA…KNIR, GHDH…CVKT, GHAE…PEPR, GHEH…KTLA, GHDN…KCVK, AHGH…VTPD, and QIRC…IFAN.

This sequence belongs to the WD repeat LIS1/nudF family. As to quaternary structure, self-associates. Interacts with NDL1 and dynein.

It is found in the cytoplasm. Its subcellular location is the cytoskeleton. It localises to the spindle pole. In terms of biological role, positively regulates the activity of the minus-end directed microtubule motor protein dynein. May enhance dynein-mediated microtubule sliding by targeting dynein to the microtubule plus end. Required for nuclear migration during vegetative growth as well as development. Required for retrograde early endosome (EE) transport from the hyphal tip. Required for localization of dynein to the mitotic spindle poles. Recruits additional proteins to the dynein complex at SPBs. This is Nuclear distribution protein PAC1-1 from Sordaria macrospora (strain ATCC MYA-333 / DSM 997 / K(L3346) / K-hell).